We begin with the raw amino-acid sequence, 285 residues long: Methylamine utilization protein MauF (285 aa).

The next 7 helical transmembrane spans lie at 39-59, 60-80, 119-139, 145-165, 188-208, 212-232, and 265-285; these read FIMM…MHST, MSVE…GGLL, YAIG…LLFA, YAVI…FGFL, VIGL…VQTP, IVTG…VIAV, and VEVD…LVML.

The protein localises to the cell membrane. The protein operates within one-carbon metabolism; methylamine degradation. This Methylophilus methylotrophus (Bacterium W3A1) protein is Methylamine utilization protein MauF (mauF).